The primary structure comprises 93 residues: Putative pterin-4-alpha-carbinolamine dehydratase (93 aa).

The protein belongs to the pterin-4-alpha-carbinolamine dehydratase family.

It carries out the reaction (4aS,6R)-4a-hydroxy-L-erythro-5,6,7,8-tetrahydrobiopterin = (6R)-L-erythro-6,7-dihydrobiopterin + H2O. The chain is Putative pterin-4-alpha-carbinolamine dehydratase from Thermomicrobium roseum (strain ATCC 27502 / DSM 5159 / P-2).